The following is a 734-amino-acid chain: Cleavage stimulation factor subunit 77 (734 aa).

12 HAT repeats span residues 20-52 (SPIA…AQMA), 54-85 (NNDD…FIRK), 93-128 (EGQE…FLKS), 139-172 (HRKT…FENT), 198-237 (ERKK…FEKG), 246-278 (SSTK…WHVK), 280-312 (GSTD…MEES), 314-345 (GAIQ…FLRR), 347-379 (EGVE…MAFC), 382-414 (KEPK…FLTR), 416-450 (NDDR…FEQT), and 474-505 (EGSS…DLDH). Residues 637–734 (VKQSFAAKGN…FSGELSGSTG (98 aa)) are disordered. Residues 664-677 (LPRDRRATKRKDSD) show a composition bias toward basic and acidic residues. Residues 709 to 734 (ATSSQTPTGSTSYGSAFSGELSGSTG) are compositionally biased toward polar residues.

In terms of assembly, homodimer. Belongs to the CSTF complex. Forms a complex with cleavage and polyadenylation specificity factor (CPSF) subunits CPSF30, CSTF64, PCFS1, PCFS5 and FIPS5.

The protein resides in the nucleus. Functionally, one of the multiple factors required for polyadenylation and 3'-end cleavage of pre-mRNAs. Required for the targeted 3' processing of antisense transcripts that triggers transcriptional silencing of the corresponding sense gene. This is Cleavage stimulation factor subunit 77 from Arabidopsis thaliana (Mouse-ear cress).